The primary structure comprises 395 residues: Chalcone synthase (395 aa).

Val-2 bears the N-acetylvaline mark. Val-2 carries the post-translational modification N-acetylalanine. The active site involves Cys-169.

This sequence belongs to the thiolase-like superfamily. Chalcone/stilbene synthases family.

It carries out the reaction (E)-4-coumaroyl-CoA + 3 malonyl-CoA + 3 H(+) = 2',4,4',6'-tetrahydroxychalcone + 3 CO2 + 4 CoA. It participates in secondary metabolite biosynthesis; flavonoid biosynthesis. Functionally, the primary product of this enzyme is 4,2',4',6'-tetrahydroxychalcone (also termed naringenin-chalcone or chalcone) which can under specific conditions spontaneously isomerize into naringenin. This Arabidopsis thaliana (Mouse-ear cress) protein is Chalcone synthase (CHS).